We begin with the raw amino-acid sequence, 156 residues long: ATP synthase subunit b 2 (156 aa).

The chain crosses the membrane as a helical span at residues Leu7–Val29.

Belongs to the ATPase B chain family. As to quaternary structure, F-type ATPases have 2 components, F(1) - the catalytic core - and F(0) - the membrane proton channel. F(1) has five subunits: alpha(3), beta(3), gamma(1), delta(1), epsilon(1). F(0) has three main subunits: a(1), b(2) and c(10-14). The alpha and beta chains form an alternating ring which encloses part of the gamma chain. F(1) is attached to F(0) by a central stalk formed by the gamma and epsilon chains, while a peripheral stalk is formed by the delta and b chains.

The protein resides in the cell inner membrane. In terms of biological role, f(1)F(0) ATP synthase produces ATP from ADP in the presence of a proton or sodium gradient. F-type ATPases consist of two structural domains, F(1) containing the extramembraneous catalytic core and F(0) containing the membrane proton channel, linked together by a central stalk and a peripheral stalk. During catalysis, ATP synthesis in the catalytic domain of F(1) is coupled via a rotary mechanism of the central stalk subunits to proton translocation. Component of the F(0) channel, it forms part of the peripheral stalk, linking F(1) to F(0). The polypeptide is ATP synthase subunit b 2 (Marinomonas sp. (strain MWYL1)).